An 818-amino-acid chain; its full sequence is Glycogen phosphorylase (818 aa).

K667 carries the post-translational modification N6-(pyridoxal phosphate)lysine.

The protein belongs to the glycogen phosphorylase family. Pyridoxal 5'-phosphate is required as a cofactor.

It carries out the reaction [(1-&gt;4)-alpha-D-glucosyl](n) + phosphate = [(1-&gt;4)-alpha-D-glucosyl](n-1) + alpha-D-glucose 1-phosphate. Functionally, phosphorylase is an important allosteric enzyme in carbohydrate metabolism. Enzymes from different sources differ in their regulatory mechanisms and in their natural substrates. However, all known phosphorylases share catalytic and structural properties. This chain is Glycogen phosphorylase (glgP), found in Pasteurella multocida (strain Pm70).